The following is a 1262-amino-acid chain: MVQQVPENISFPAEEEKILEFWSKHNCFQECLKQSKLRPKFTFYDGPPFATGLPHYGHILAGTIKDIVTRYAHQSGFHVDRRFGWDCHGLPVEYEIDKTLGIKGPEDVAKMGIAEYNKQCRAIVMRYSAEWKSTVTRLGRWIDFDNDYKTLYPQFMESVWWVFKQLYDKGLVYRGVKVMPFSTACGTPLSNFESNQNYKDVQDPSVFVTFPLEEDENTSLVAWTTTPWTLPSNLALCVNPEIQYVKIKDVARGKLFILTEARLSALYKQESDYEILERFPGASLKGKKYKPLFDYFIKCKENGAFTVLVDHYVKDEEGTGVVHQAPYFGADDHRVCMDFNIIQKDSVPVCPVDASGCFTEEVTHFVGQYVKDADKNIIRMLKEQGRLLAAGTFTHSYPFCWRSDTPLIYKSVPSWFVRVEPMVDQLLKNNDLCYWVPEFVREKRFGNWLKEARDWAISRNRYWGTPIPLWVSEDLEEVVCIGSVAELEELSGTKISDLHRESIDHLTIPSRCGKAPLRRVSEVFDCWFESGSMPYAQVHYPFESKREFEDAFPADFIAEGIDQTRGWFYTLLVLATALFGQPPFKNVIVNGLILASDGQKMSKRKKNYPDPVSIIDKYGADALRLYLINSPVVRAENLRFKEEGVRDVLKDVLLPWYNAYRFFIQNVFRLHKEEEVKFLYNEHTVRESPNITDRWVLSFMQSLLGFFETEMAAYRLYTVVPRLVKFVDILTNWYVRMNRRRLKGESGVEDCVMALETLFSVLLSLCRLMAPYTPFLTELMYQNLKLLIDPASLRDKDTLSIHYLMLPRVREELIDKKTENAVSRMQSVIELGRVIRDRKTIPIKYPLKEIVVIHQDPEALEDIRSLEKYIIEELNVRKVTLSTDKNKYGIRLRAEPDHMVLGKRLKGAFKAVMMAIKRLSNEELERFQKSGSIVVEGHELHEEDIRLMYTFDQATGGTAQFEAHSDAQALVLLDVTPDQSMVDEGMAREVINRIQKLRKKCNLVPTDEITVYYNAKSEGRYLNNVIESHTDFIFATIKAPLKPYPVPTSDNILIQEQTQLKGSELEITLTKGSCVPGPACAYVNLNICANGTEQGGVLLLENPKGDNQLNLVKLKTVVTSVFGVKNAKLSVFHGETEIQNQTDLLSLSGRTLCVTAGASPSPISSPSTLLCQYLNLQLLNAEPQECLTGTVGTLLLENPLGQNGLTHQGLVHEAAKVFGLRSRRLRLFLNETQTQEITEDIPMKTLNMKTVYVSVLPTTADG.

At M1 the chain carries N-acetylmethionine. The 'HIGH' region motif lies at 48–58 (PFATGLPHYGH). The 'KMSKS' region signature appears at 600–604 (KMSKR). ATP is bound at residue K603. Phosphoserine is present on S1049. Phosphothreonine is present on T1058.

The protein belongs to the class-I aminoacyl-tRNA synthetase family. In terms of assembly, part of a multisubunit complex that groups tRNA ligases for Arg (RARS1), Asp (DARS1), Gln (QARS1), Ile (IARS1), Leu (LARS1), Lys (KARS1), Met (MARS1) the bifunctional ligase for Glu and Pro (EPRS1) and the auxiliary subunits AIMP1/p43, AIMP2/p38 and EEF1E1/p18.

Its subcellular location is the cytoplasm. The protein resides in the cytosol. The catalysed reaction is tRNA(Ile) + L-isoleucine + ATP = L-isoleucyl-tRNA(Ile) + AMP + diphosphate. Catalyzes the specific attachment of an amino acid to its cognate tRNA in a 2 step reaction: the amino acid (AA) is first activated by ATP to form AA-AMP and then transferred to the acceptor end of the tRNA. This Mus musculus (Mouse) protein is Isoleucine--tRNA ligase, cytoplasmic (Iars1).